The following is a 429-amino-acid chain: Ribosomal RNA small subunit methyltransferase B (429 aa).

S-adenosyl-L-methionine-binding positions include 254–260 (CAAPGGK), Asp-277, Asp-303, and Asp-322. Cys-375 functions as the Nucleophile in the catalytic mechanism.

The protein belongs to the class I-like SAM-binding methyltransferase superfamily. RsmB/NOP family.

It localises to the cytoplasm. The catalysed reaction is cytidine(967) in 16S rRNA + S-adenosyl-L-methionine = 5-methylcytidine(967) in 16S rRNA + S-adenosyl-L-homocysteine + H(+). In terms of biological role, specifically methylates the cytosine at position 967 (m5C967) of 16S rRNA. In Yersinia enterocolitica serotype O:8 / biotype 1B (strain NCTC 13174 / 8081), this protein is Ribosomal RNA small subunit methyltransferase B.